The chain runs to 317 residues: MIIMKLIFLGTGAAVPSKNRNHIGIAFKFGGEVFLFDCGENIQRQMLFTEVSPMKINHIFITHLHGDHILGIPGLLQSMGFFGREKELKIFGPEGTKEIIENSLKLGTHYIEFPIKVYEIYTKEPITIYKEENYEIIAYPTEHGIPSYAYIFKEIKKPRLDIEKAKKLGVKIGPDLKKLKNGEAVKNIYGEIIKPEYVLLPPKKGFCLAYSGDTLPLEDFGKYLKELGCDVLIHEATFDDSAKDAAKENMHSTIGDAVNIAKLANVKALILTHISARYDKEEYFNLYKMNVKQYNESFKIIISEDLKSYDIKKDLLG.

Zn(2+)-binding residues include His-63, His-65, Asp-67, His-68, His-143, Asp-213, and His-273. The active-site Proton acceptor is Asp-67.

This sequence belongs to the RNase Z family. In terms of assembly, homodimer. Zn(2+) is required as a cofactor.

It carries out the reaction Endonucleolytic cleavage of RNA, removing extra 3' nucleotides from tRNA precursor, generating 3' termini of tRNAs. A 3'-hydroxy group is left at the tRNA terminus and a 5'-phosphoryl group is left at the trailer molecule.. In terms of biological role, zinc phosphodiesterase, which displays some tRNA 3'-processing endonuclease activity. Probably involved in tRNA maturation, by removing a 3'-trailer from precursor tRNA. The protein is Ribonuclease Z of Methanocaldococcus jannaschii (strain ATCC 43067 / DSM 2661 / JAL-1 / JCM 10045 / NBRC 100440) (Methanococcus jannaschii).